Consider the following 391-residue polypeptide: Formate-dependent phosphoribosylglycinamide formyltransferase (391 aa).

Residues 18–19 and Glu-78 each bind N(1)-(5-phospho-beta-D-ribosyl)glycinamide; that span reads EL. ATP is bound by residues Arg-110, Lys-151, 156–161, 191–194, and Glu-199; these read SSGKGQ and EEFI. Residues 115–305 form the ATP-grasp domain; that stretch reads DLASKDLKIK…EFELHLRAFL (191 aa). Glu-264 and Glu-276 together coordinate Mg(2+). N(1)-(5-phospho-beta-D-ribosyl)glycinamide contacts are provided by residues Asp-283, Lys-353, and 360–361; that span reads RR.

It belongs to the PurK/PurT family. Homodimer.

It catalyses the reaction N(1)-(5-phospho-beta-D-ribosyl)glycinamide + formate + ATP = N(2)-formyl-N(1)-(5-phospho-beta-D-ribosyl)glycinamide + ADP + phosphate + H(+). Its pathway is purine metabolism; IMP biosynthesis via de novo pathway; N(2)-formyl-N(1)-(5-phospho-D-ribosyl)glycinamide from N(1)-(5-phospho-D-ribosyl)glycinamide (formate route): step 1/1. Its function is as follows. Involved in the de novo purine biosynthesis. Catalyzes the transfer of formate to 5-phospho-ribosyl-glycinamide (GAR), producing 5-phospho-ribosyl-N-formylglycinamide (FGAR). Formate is provided by PurU via hydrolysis of 10-formyl-tetrahydrofolate. The sequence is that of Formate-dependent phosphoribosylglycinamide formyltransferase from Prochlorococcus marinus (strain MIT 9301).